The primary structure comprises 768 residues: DNA ligase 1 (768 aa).

The disordered stretch occupies residues 42–139 (VEVSQSSSDS…KEPPLESNAR (98 aa)). Residues 52–99 (KNVDGRSTSEKRKVESVKLVDESKHNNHDDTGTQNVERENNIVSEAKK) show a composition bias toward basic and acidic residues. Positions 104-124 (GSSSSSSDAVSSNNDSGASTP) are enriched in low complexity. Residues 309 to 318 (KLRLQLAEKT) form an interaction with target DNA region. Glu-414 provides a ligand contact to ATP. Lys-416 (N6-AMP-lysine intermediate) is an active-site residue. Positions 421 and 437 each coordinate ATP. Glu-469 is a Mg(2+) binding site. The interval 490–492 (KRK) is interaction with target DNA. Glu-568 is a binding site for Mg(2+). ATP is bound by residues Lys-573, Arg-587, and Lys-593.

The protein belongs to the ATP-dependent DNA ligase family. It depends on Mg(2+) as a cofactor.

Its subcellular location is the nucleus. The enzyme catalyses ATP + (deoxyribonucleotide)n-3'-hydroxyl + 5'-phospho-(deoxyribonucleotide)m = (deoxyribonucleotide)n+m + AMP + diphosphate.. DNA ligase that seals nicks in double-stranded DNA during DNA replication, DNA recombination and DNA repair. The protein is DNA ligase 1 (cdc17) of Schizosaccharomyces pombe (strain 972 / ATCC 24843) (Fission yeast).